A 292-amino-acid chain; its full sequence is Probable endonuclease 4 (292 aa).

9 residues coordinate Zn(2+): H70, H111, E146, D180, H183, H215, D228, H230, and E260.

This sequence belongs to the AP endonuclease 2 family. The cofactor is Zn(2+).

The enzyme catalyses Endonucleolytic cleavage to 5'-phosphooligonucleotide end-products.. Functionally, endonuclease IV plays a role in DNA repair. It cleaves phosphodiester bonds at apurinic or apyrimidinic (AP) sites, generating a 3'-hydroxyl group and a 5'-terminal sugar phosphate. This chain is Probable endonuclease 4, found in Shouchella clausii (strain KSM-K16) (Alkalihalobacillus clausii).